A 157-amino-acid chain; its full sequence is Protein Smg (157 aa).

It belongs to the Smg family.

This is Protein Smg from Shigella boydii serotype 18 (strain CDC 3083-94 / BS512).